We begin with the raw amino-acid sequence, 559 residues long: Protein pp71 (559 aa).

An S-nitrosocysteine; by host modification is found at C218. The residue at position 223 (T223) is a Phosphothreonine. 2 disordered regions span residues 404–440 and 530–559; these read EFLP…TPLS and SSTL…RPRI. Residues 415-430 are compositionally biased toward acidic residues; that stretch reads TEEEEEEEEEDDEDDL. Composition is skewed to low complexity over residues 431-440 and 543-559; these read SSTPTPTPLS and PIST…RPRI.

It belongs to the herpesviridae pp71 family. Interacts with the host protein DAXX; this interaction takes place at ND10 and induces the reversal of DAXX-mediated repression of viral transcription. Interacts with UL35. Interacts with host TMEM173/STING1; this interaction inhibits the cGAS/STING pathway. Interacts with host RB1; this interaction mediates RB1 proteasomal degradation. S-nitrosylation limits ability to undermine the cGAS/STING antiviral pathway.

It localises to the virion tegument. Its subcellular location is the host nucleus. The protein localises to the host endoplasmic reticulum. Its function is as follows. Stimulates viral immediate-early (IE) transcription. Plays a role in the inhibition of the host innate repsonse by targeting STING1 and thus the cGAS-STING pathway. Also counteracts host DAXX-mediated repression of viral transcription. Displaces a DAXX-binding protein, ATRX, from nuclear domain 10 sites (ND10) shortly after infection. Increases the basal level of SUMOylated DAXX in infected cells. Stimulates quiescent cells to re-enter the cell cycle, proceed through G1 and enter the S phase. Interacts with hypophosphorylated forms of RB1 and induces their degradation by the proteasome without involving ubiquitin conjugation. The chain is Protein pp71 (UL82) from Human cytomegalovirus (strain AD169) (HHV-5).